We begin with the raw amino-acid sequence, 271 residues long: Phosphatidylinositol transfer protein beta isoform (271 aa).

An N6-acetyllysine modification is found at Lys-215. At Ser-262 the chain carries Phosphoserine.

The protein belongs to the PtdIns transfer protein family. PI transfer class I subfamily. Post-translationally, constitutive phosphorylation of Ser-262 has no effect on phospholipid transfer activity but is required for Golgi targeting.

The protein resides in the golgi apparatus. It is found in the golgi apparatus membrane. The protein localises to the endoplasmic reticulum membrane. The catalysed reaction is a 1,2-diacyl-sn-glycero-3-phosphocholine(in) = a 1,2-diacyl-sn-glycero-3-phosphocholine(out). It catalyses the reaction a 1,2-diacyl-sn-glycero-3-phospho-(1D-myo-inositol)(in) = a 1,2-diacyl-sn-glycero-3-phospho-(1D-myo-inositol)(out). It carries out the reaction an N-(acyl)-sphingosylphosphocholine(in) = an N-(acyl)-sphingosylphosphocholine(out). In terms of biological role, catalyzes the transfer of phosphatidylinositol, phosphatidylcholine and sphingomyelin between membranes. Required for COPI-mediated retrograde transport from the Golgi to the endoplasmic reticulum; phosphatidylinositol and phosphatidylcholine transfer activity is essential for this function. The polypeptide is Phosphatidylinositol transfer protein beta isoform (PITPNB) (Bos taurus (Bovine)).